Reading from the N-terminus, the 235-residue chain is MQQKNWTIDLEGMMAAGIHFGHQTQRWNPKMSPYIFTERKGVHILDLTQTARLLSEACDLVFDAAVEGKEFLMVGTKNQVTDLIVSAALKSQCHYVNEKWLAGTLTNWVTTETRLRRFQHLQTGGDLGEFDRLPKREAAILKGQLVRLKKCLGGIQYMSDLPDIAIITDQHEQSIALKECSILGIPTICIVDTDCDPDLVDVPIPGNDDARSSIRWILDKLALAISEGRSNIKVT.

This sequence belongs to the universal ribosomal protein uS2 family.

The protein resides in the plastid. It localises to the chloroplast. This is Small ribosomal subunit protein uS2c (rps2) from Adiantum capillus-veneris (Maidenhair fern).